A 371-amino-acid polypeptide reads, in one-letter code: MALNEEYTYVELEKEPYWPFEKLRISITGAGGFIASHIARRLKSEGHYIIASDWKKNEHMTEDMFCHEFHLVDLRVMDNCLKVTTGVDHVFNLAADMGGMGFIQSNHSVIMYNNTMISFNMLEAARINGVKRFFYASSACIYPEFKQLDTVVSLKESDAWPAEPQDAYGLEKLATEELCKHYTKDFGIECRVGRFHNIYGPFGTWKGGREKAPAAFCRKALTSTDRFEMWGDGLQTRSFTFIDECVEGVLRLTKSDFREPVNIGSDEMVSMNEMAEIVLSFENKQLPIHHIPGPEGVRGRNSDNTLIKEKLGWAPTMRLKDGLRITYFWIKEQLEKEKAEGVDLSAYGSSKVVQTQAPVQLGSLRAADGKE.

NAD(+)-binding positions include 29–55, Asp-53, and Asp-73; that span reads GAGGFIASHIARRLKSEGHYIIASDWK. Substrate contacts are provided by residues Gly-98 and 138 to 140; that span reads SAC. NAD(+)-binding residues include Tyr-168 and Lys-172. Tyr-168 acts as the Proton acceptor in catalysis. Substrate-binding positions include Asn-197, 210–212, Lys-219, 235–237, Arg-300, and Ser-350; these read EKA and QTR.

It belongs to the NAD(P)-dependent epimerase/dehydratase family. NAD(+) is required as a cofactor.

The enzyme catalyses GDP-alpha-D-mannose = GDP-beta-L-gulose. It carries out the reaction GDP-beta-L-gulose = GDP-beta-L-galactose. It functions in the pathway cofactor biosynthesis; L-ascorbate biosynthesis via GDP-alpha-D-mannose pathway; L-ascorbate from GDP-alpha-D-mannose: step 1/5. In terms of biological role, catalyzes a reversible epimerization of GDP-D-mannose that precedes the committed step in the biosynthesis of vitamin C (L-ascorbate), resulting in the hydrolysis of the highly energetic glycosyl-pyrophosphoryl linkage. Able to catalyze 2 distinct epimerization reactions and can release both GDP-L-galactose and GDP-L-gulose from GDP-mannose. The polypeptide is GDP-mannose 3,5-epimerase 2 (GME-2) (Oryza sativa subsp. japonica (Rice)).